The primary structure comprises 201 residues: Lipopolysaccharide core heptose(II)-phosphate phosphatase (201 aa).

Positions 1–35 (MLAFTLRFIKNKRYLATLAGALVIIAGLTSQHAWS) are cleaved as a signal peptide.

This sequence belongs to the phosphoglycerate mutase family. Ais subfamily.

It localises to the periplasm. Its pathway is bacterial outer membrane biogenesis; lipopolysaccharide metabolism. Its function is as follows. Catalyzes the dephosphorylation of heptose(II) of the outer membrane lipopolysaccharide core. The sequence is that of Lipopolysaccharide core heptose(II)-phosphate phosphatase from Salmonella choleraesuis (strain SC-B67).